The primary structure comprises 504 residues: Glycerol kinase (504 aa).

Thr-12 serves as a coordination point for ADP. Positions 12, 13, and 14 each coordinate ATP. Thr-12 is a binding site for sn-glycerol 3-phosphate. Arg-16 lines the ADP pocket. Sn-glycerol 3-phosphate-binding residues include Arg-82, Glu-83, Tyr-134, and Asp-244. The glycerol site is built by Arg-82, Glu-83, Tyr-134, Asp-244, and Gln-245. Thr-266 and Gly-309 together coordinate ADP. ATP is bound by residues Thr-266, Gly-309, Gln-313, and Gly-410. Residues Gly-410 and Asn-414 each contribute to the ADP site.

The protein belongs to the FGGY kinase family. As to quaternary structure, homotetramer and homodimer (in equilibrium).

It carries out the reaction glycerol + ATP = sn-glycerol 3-phosphate + ADP + H(+). The protein operates within polyol metabolism; glycerol degradation via glycerol kinase pathway; sn-glycerol 3-phosphate from glycerol: step 1/1. Its activity is regulated as follows. Activated by phosphorylation and inhibited by fructose 1,6-bisphosphate (FBP). Functionally, key enzyme in the regulation of glycerol uptake and metabolism. Catalyzes the phosphorylation of glycerol to yield sn-glycerol 3-phosphate. This Alkaliphilus oremlandii (strain OhILAs) (Clostridium oremlandii (strain OhILAs)) protein is Glycerol kinase.